A 316-amino-acid chain; its full sequence is Phospholipase A1 2 (316 aa).

An N-terminal signal peptide occupies residues 1-4 (ADDL). The propeptide occupies 5-14 (TTLRNGTLDR). An intrachain disulfide couples C20 to C103. S153 serves as the catalytic Nucleophile. The active-site Charge relay system is the D181. 2 cysteine pairs are disulfide-bonded: C192-C197 and C235-C240. The active-site Charge relay system is the H242. 3 cysteine pairs are disulfide-bonded: C257-C284, C258-C309, and C277-C282.

The protein belongs to the AB hydrolase superfamily. Lipase family. In terms of tissue distribution, expressed by the venom gland.

It localises to the secreted. It carries out the reaction a 1,2-diacyl-sn-glycero-3-phosphocholine + H2O = a 2-acyl-sn-glycero-3-phosphocholine + a fatty acid + H(+). In terms of biological role, catalyzes the hydrolysis of phosphatidylcholine with phospholipase A1 activity. May act as an allergen and induce hemolytic activity. This Polistes dominula (European paper wasp) protein is Phospholipase A1 2.